The chain runs to 287 residues: L-ascorbate peroxidase 3 (287 aa).

An N-acetylalanine modification is found at A2. H40 serves as the catalytic Proton acceptor. Positions D46–H66 are disordered. H160 is a heme b binding site. Positions 161, 177, and 184 each coordinate K(+). A helical transmembrane segment spans residues I259–F279. The AKR2A-binding sequence (ABS) required for peroxisome membrane targeting signature appears at E281 to K287.

This sequence belongs to the peroxidase family. Ascorbate peroxidase subfamily. In terms of assembly, interacts via its C-terminal region with AKR2A and AKR2B. Heme b serves as cofactor.

It localises to the peroxisome membrane. The protein resides in the glyoxysome membrane. It carries out the reaction L-ascorbate + H2O2 = L-dehydroascorbate + 2 H2O. Plays a key role in hydrogen peroxide removal. This Arabidopsis thaliana (Mouse-ear cress) protein is L-ascorbate peroxidase 3 (APX3).